A 300-amino-acid chain; its full sequence is UPF0761 membrane protein Patl_3954 (300 aa).

The next 6 membrane-spanning stretches (helical) occupy residues 46–66, 103–123, 138–158, 184–204, 214–234, and 248–268; these read LLSL…FPAF, MGAI…SNID, IIFT…LIGL, MLKI…YMIV, ALVG…GFSF, and AMAV…VVLL.

Belongs to the UPF0761 family.

Its subcellular location is the cell inner membrane. This Pseudoalteromonas atlantica (strain T6c / ATCC BAA-1087) protein is UPF0761 membrane protein Patl_3954.